Consider the following 176-residue polypeptide: MKIPKEGDFITIQSYKHDGNLHRTWRDTMVLKTNENSIIGVNDHTLVTESDDRRWVTREPAIVYFHKKFWFNIIAMIREEGVSYYCNLASPFVLDNEALKYIDYDLDVKVFKDGEKKLLDVEEYERHRRNMHYPKEIDHILKENVKILVDWINNEKGPFSKEYVEIWYNRYHQLKK.

Arg-23 (proton donor) is an active-site residue. Residues Asn-87, Asp-103, Asp-105, Asp-107, Asp-120, and Glu-123 each contribute to the Mg(2+) site.

It belongs to the Ntdp family. The cofactor is Mg(2+).

The enzyme catalyses a ribonucleoside 5'-triphosphate + H2O = a ribonucleoside 5'-diphosphate + phosphate + H(+). The catalysed reaction is a ribonucleoside 5'-diphosphate + H2O = a ribonucleoside 5'-phosphate + phosphate + H(+). Functionally, has nucleoside phosphatase activity towards nucleoside triphosphates and nucleoside diphosphates. This chain is Nucleoside triphosphate/diphosphate phosphatase, found in Lactococcus lactis subsp. cremoris (strain MG1363).